A 499-amino-acid chain; its full sequence is Potassium voltage-gated channel subfamily A member 2 (499 aa).

Positions 1 to 26 (MTVATGDPVDEAAALPGHPQDTYDPE) are disordered. The tract at residues 1-125 (MTVATGDPVD…YELGEEAMEM (125 aa)) is tetramerization domain. The Cytoplasmic segment spans residues 1–160 (MTVATGDPVD…LLFEYPESSG (160 aa)). Residues 161-182 (PARIIAIVSVMVILISIVSFCL) form a helical membrane-spanning segment. Residues 183–221 (ETLPIFRDENEDMHGGGVTFHTYSNSTIGYQQSTSFTDP) lie on the Extracellular side of the membrane. The N-linked (GlcNAc...) asparagine glycan is linked to Asn207. The chain crosses the membrane as a helical span at residues 222 to 243 (FFIVETLCIIWFSFEFLVRFFA). Residue Cys244 is the site of S-palmitoyl cysteine attachment. Residues 244–254 (CPSKAGFFTNI) are Cytoplasmic-facing. The helical transmembrane segment at 255 to 275 (MNIIDIVAIIPYFITLGTELA) threads the bilayer. Residues 276–289 (EKPEDAQQGQQAMS) lie on the Extracellular side of the membrane. A helical; Voltage-sensor membrane pass occupies residues 290-310 (LAILRVIRLVRVFRIFKLSRH). Residues 311-325 (SKGLQILGQTLKASM) lie on the Cytoplasmic side of the membrane. The tract at residues 312-325 (KGLQILGQTLKASM) is S4-S5 linker. Residues 326–347 (RELGLLIFFLFIGVILFSSAVY) traverse the membrane as a helical segment. The Extracellular segment spans residues 348 to 361 (FAEADERDSQFPSI). The segment at residues 362–373 (PDAFWWAVVSMT) is an intramembrane region (helical). The Selectivity filter signature appears at 374–379 (TVGYGD). An intramembrane segment occupies 374–381 (TVGYGDMV). Topologically, residues 382–388 (PTTIGGK) are extracellular. A helical transmembrane segment spans residues 389–417 (IVGSLCAIAGVLTIALPVPVIVSNFNYFY). Residues 418-499 (HRETEGEEQA…VNITKMLTDV (82 aa)) are Cytoplasmic-facing. At Tyr429 the chain carries Phosphotyrosine. Ser434, Ser440, Ser441, and Ser449 each carry phosphoserine. A Phosphotyrosine modification is found at Tyr458. Phosphoserine is present on Ser468. Positions 497–499 (TDV) match the PDZ-binding motif.

The protein belongs to the potassium channel family. A (Shaker) (TC 1.A.1.2) subfamily. Kv1.2/KCNA2 sub-subfamily. In terms of assembly, homotetramer and heterotetramer with other channel-forming alpha subunits, such as KCNA1, KCNA4, KCNA5, KCNA6 and KCNA7. Channel activity is regulated by interaction with beta subunits, including KCNAB1 and KCNAB2. Identified in a complex with KCNA1 and KCNAB2. Identified in a complex with KCNA5 and KCNAB1. Identified in a complex with KCNA4 and FYN. Interacts with PTK2B. Interacts (via C-terminus) with CTTN. Interacts with ADAM22. Interacts with CNTNAP2. Interacts (via C-terminus) with the PDZ domains of DLG1, DLG2 and DLG4. Interacts (via N-terminal cytoplasmic domain) with RHOA (GTP-bound form); this regulates channel activity by reducing location at the cell surface in response to CHRM1 activation. Interacts with DRD2. Interacts with SIGMAR1; cocaine consumption leads to increased interaction. Interacts with ADAM11. Interacts with LYNX1. In terms of processing, phosphorylated on tyrosine residues; phosphorylation increases in response to ischemia. Phosphorylated on tyrosine residues by activated PTK2B/PYK2. Phosphorylation on tyrosine residues suppresses ion channel activity. Phosphorylated on tyrosine residues in response to CHRM1 activation; this abolishes interaction with CTTN. This is probably due to endocytosis of the phosphorylated channel subunits. Phosphorylated on serine residues in response to increased cAMP levels; phosphorylation is apparently not catalyzed by PKA. Post-translationally, N-glycosylated, with complex, sialylated N-glycans. Detected in brain. Detected in cerebellum. Detected in mitral cells in the olfactory bulb. Detected in cochlea. Detected in cerebellum, particularly in the basket cell axon plexus and in the terminal regions around Purkinje cells (at protein level). Detected in juxtaparanodal regions in sciatic nerve. Detected in Schwann cells from sciatic nerve. Detected in dopamine neurons in substantia nigra. Detected in large myelinated fibers in juxtaparanodes in the CA3 and CA1 areas of the hippocampus. Detected in brain, in punctae on fiber tracts in brain stem and spinal cord, and on axons in the juxtaparanodal regions of the node of Ranvier (at protein level). Detected in dopamine neurons in the midbrain.

It is found in the cell membrane. The protein resides in the membrane. The protein localises to the cell projection. Its subcellular location is the axon. It localises to the synapse. It is found in the endoplasmic reticulum membrane. The protein resides in the lamellipodium membrane. The protein localises to the synaptosome. Its subcellular location is the presynaptic cell membrane. It localises to the dendrite. It is found in the perikaryon. The protein resides in the cell junction. The protein localises to the paranodal septate junction. It catalyses the reaction K(+)(in) = K(+)(out). Inhibited by 4-aminopyridine (4-AP), dendrotoxin (DTX) and charybdotoxin (CTX), but not by tetraethylammonium (TEA). Inhibited by tityustoxin-K alpha (TsTX-Kalpha), a toxin that is highly specific for KCNA2. Inhibited by maurotoxin. Inhibited by kappaM conotoxins kappaM-RIIIJ and kappaM-RIIIK. In terms of biological role, voltage-gated potassium channel that mediates transmembrane potassium transport in excitable membranes, primarily in the brain and the central nervous system, but also in the cardiovascular system. Prevents aberrant action potential firing and regulates neuronal output. Forms tetrameric potassium-selective channels through which potassium ions pass in accordance with their electrochemical gradient. The channel alternates between opened and closed conformations in response to the voltage difference across the membrane. Can form functional homotetrameric channels and heterotetrameric channels that contain variable proportions of KCNA1, KCNA2, KCNA4, KCNA5, KCNA6, KCNA7, and possibly other family members as well; channel properties depend on the type of alpha subunits that are part of the channel. Channel properties are modulated by cytoplasmic beta subunits that regulate the subcellular location of the alpha subunits and promote rapid inactivation of delayed rectifier potassium channels. In vivo, membranes probably contain a mixture of heteromeric potassium channel complexes, making it difficult to assign currents observed in intact tissues to any particular potassium channel family member. Homotetrameric KCNA2 forms a delayed-rectifier potassium channel that opens in response to membrane depolarization, followed by slow spontaneous channel closure. In contrast, a heteromultimer formed by KCNA2 and KCNA4 shows rapid inactivation. Contributes to the regulation of action potentials in neurons. KCNA2-containing channels play a presynaptic role and prevent hyperexcitability and aberrant action potential firing. Response to toxins that are selective for KCNA1, respectively for KCNA2, suggests that heteromeric potassium channels composed of both KCNA1 and KCNA2 play a role in pacemaking and regulate the output of deep cerebellar nuclear neurons. Response to toxins that are selective for KCNA2-containing potassium channels suggests that in Purkinje cells, dendritic subthreshold KCNA2-containing potassium channels prevent random spontaneous calcium spikes, suppressing dendritic hyperexcitability without hindering the generation of somatic action potentials, and thereby play an important role in motor coordination. KCNA2-containing channels play a role in GABAergic transmission from basket cells to Purkinje cells in the cerebellum, and thereby play an import role in motor coordination. Plays a role in the induction of long-term potentiation of neuron excitability in the CA3 layer of the hippocampus. May function as down-stream effector for G protein-coupled receptors and inhibit GABAergic inputs to basolateral amygdala neurons. May contribute to the regulation of neurotransmitter release, such as gamma-aminobutyric acid (GABA). Contributes to the regulation of the axonal release of the neurotransmitter dopamine. Reduced KCNA2 expression plays a role in the perception of neuropathic pain after peripheral nerve injury, but not acute pain. Plays a role in the regulation of the time spent in non-rapid eye movement (NREM) sleep. The sequence is that of Potassium voltage-gated channel subfamily A member 2 (Kcna2) from Mus musculus (Mouse).